Here is a 234-residue protein sequence, read N- to C-terminus: Demethylmenaquinone methyltransferase (234 aa).

S-adenosyl-L-methionine-binding positions include T58, D79, and 106 to 107; that span reads NA.

It belongs to the class I-like SAM-binding methyltransferase superfamily. MenG/UbiE family.

The catalysed reaction is a 2-demethylmenaquinol + S-adenosyl-L-methionine = a menaquinol + S-adenosyl-L-homocysteine + H(+). Its pathway is quinol/quinone metabolism; menaquinone biosynthesis; menaquinol from 1,4-dihydroxy-2-naphthoate: step 2/2. Functionally, methyltransferase required for the conversion of demethylmenaquinol (DMKH2) to menaquinol (MKH2). The sequence is that of Demethylmenaquinone methyltransferase from Geobacillus stearothermophilus (Bacillus stearothermophilus).